The sequence spans 248 residues: Secreted and transmembrane protein 1 (248 aa).

The signal sequence occupies residues 1 to 28 (MQTCPLAFPGHVSQALGTLLFLAASLSA). The Extracellular segment spans residues 29–145 (QNEGWDSPIC…AEPQSAPDTG (117 aa)). C38 and C55 are oxidised to a cystine. N56 carries an N-linked (GlcNAc...) asparagine glycan. The chain crosses the membrane as a helical span at residues 146 to 166 (FWPVPAVVTAVFILLVALVMF). Over 167 to 248 (AWYRCRCSQQ…QPLFPYAADP (82 aa)) the chain is Cytoplasmic.

The protein belongs to the SECTM family. In terms of assembly, interacts with CD7. As to expression, detected at the highest levels in peripheral blood leukocytes and breast cancer cell lines. Found in leukocytes of the myeloid lineage, with the strongest expression observed in granulocytes and no detectable expression in lymphocytes. Expressed in thymic epithelial cells and fibroblasts.

It localises to the cell membrane. The protein resides in the secreted. Its function is as follows. May be involved in thymocyte signaling. This is Secreted and transmembrane protein 1 (SECTM1) from Homo sapiens (Human).